We begin with the raw amino-acid sequence, 449 residues long: MLNYIYNHSPIIFQNLMVSIKGKIFMKQRYTKHYYEEIKRLRECNDLFELQNQRFEEFYNYIKKNSEFYSEIIKKNNLSGKKITVANINQLPEITKDDIRKNVDKIITKKKNKLIKMGTGGSTGKSMVFYTNAYDMSRKIAYLDYFKEQHGVYKGMKRVSVGGRKIVPIKQKKKVFWRYNKPLNQLMISAYHADGENLKYYIKKLNKFQPETLDGYTTVIHRIARYILDNNIELSFTPIAIFPNAETLTDLMRDDIEKAFNCPVRNQYASSEGAPFITENKEGELEINVATGVFECKQIHGNIYELIVTGFYTTTTPLLRYKIGDSVELENELPVNYQQKDIKIKRIIGRNNDFLQSREKGIVTNVNLSTAIRFVENDVIESQFVQNDIDNIIVYLVISNDADKNNIIKKLKYELKFRFGTNTNFHFEFVNKIPSTPGGKKRFAINNIK.

It functions in the pathway capsule biogenesis; capsule polysaccharide biosynthesis. Its function is as follows. Required for the biosynthesis of type 1 capsular polysaccharide. This is Protein CapK (capK) from Staphylococcus aureus.